We begin with the raw amino-acid sequence, 107 residues long: Envelope small membrane protein (107 aa).

The Virion surface segment spans residues 1 to 11 (MMNLVNKSLEE). A helical transmembrane segment spans residues 12–32 (NGSFLTAVYIFCAFVALYLLG). Over 33-107 (RALHAFVQAA…NFQNDGKLHS (75 aa)) the chain is Intravirion.

Belongs to the gammacoronaviruses E protein family. In terms of assembly, homooligomer. Interacts with the M membrane protein in the budding compartment of the host cell, which is located between endoplasmic reticulum and the Golgi complex. The cytoplasmic tails of both proteins are important for this function. Interacts with Nucleoprotein.

It is found in the host Golgi apparatus membrane. Plays a central role in virus morphogenesis and assembly. Acts as a viroporin and self-assembles in host membranes forming pentameric protein-lipid pores that allow ion transport. Also plays a role in the induction of apoptosis. The protein is Envelope small membrane protein of Gallus gallus (Chicken).